Reading from the N-terminus, the 853-residue chain is DNA mismatch repair protein MutS (853 aa).

ATP is bound at residue 614 to 621 (GPNMGGKS).

Belongs to the DNA mismatch repair MutS family.

Its function is as follows. This protein is involved in the repair of mismatches in DNA. It is possible that it carries out the mismatch recognition step. This protein has a weak ATPase activity. This is DNA mismatch repair protein MutS from Escherichia coli O7:K1 (strain IAI39 / ExPEC).